The chain runs to 225 residues: Pyridoxine/pyridoxamine 5'-phosphate oxidase (225 aa).

Residues 9–12 (RVDY) and Lys78 contribute to the substrate site. FMN is bound by residues 73–78 (RTVLCK), 88–89 (YT), Lys95, and Gln117. Substrate is bound by residues Tyr135, Arg139, and Ser143. Residues 152 to 153 (QS) and Trp198 contribute to the FMN site. 204–206 (RLH) serves as a coordination point for substrate. Residue Arg208 participates in FMN binding.

The protein belongs to the pyridoxamine 5'-phosphate oxidase family. In terms of assembly, homodimer. The cofactor is FMN.

The catalysed reaction is pyridoxamine 5'-phosphate + O2 + H2O = pyridoxal 5'-phosphate + H2O2 + NH4(+). It carries out the reaction pyridoxine 5'-phosphate + O2 = pyridoxal 5'-phosphate + H2O2. The protein operates within cofactor metabolism; pyridoxal 5'-phosphate salvage; pyridoxal 5'-phosphate from pyridoxamine 5'-phosphate: step 1/1. It functions in the pathway cofactor metabolism; pyridoxal 5'-phosphate salvage; pyridoxal 5'-phosphate from pyridoxine 5'-phosphate: step 1/1. Functionally, catalyzes the oxidation of either pyridoxine 5'-phosphate (PNP) or pyridoxamine 5'-phosphate (PMP) into pyridoxal 5'-phosphate (PLP). The protein is Pyridoxine/pyridoxamine 5'-phosphate oxidase of Nocardia farcinica (strain IFM 10152).